The following is a 41-amino-acid chain: Phospholipase A2 homolog nigroviriditoxin acidic subunit A (41 aa).

This sequence belongs to the phospholipase A2 family. Group II subfamily. D49 sub-subfamily. In terms of assembly, nigroviriditoxin is a heterodimer of an acidic subunit A and a basic subunit B. In terms of tissue distribution, expressed by the venom gland.

It is found in the secreted. In terms of biological role, heterodimer A-B: Nigroviriditoxin possesses phospholipase A2 (PLA2) activity. It consists of a non-covalent association of a basic PLA2 subunit B with a non-enzymatic subunit A. Functionally, subunit A: The acidic subunit of nigroviriditoxin probably is a heterotrimer of three disulfide-linked chains generated by post-translational maturation of a PLA2-like precursor. It appears to have no PLA2 activity of its own, instead inhibiting the catalytic activity of subunit B. It is not toxic to mice by itself but increases toxicity of subunit B. The polypeptide is Phospholipase A2 homolog nigroviriditoxin acidic subunit A (Bothriechis nigroviridis (Black-speckled palm pit viper)).